The chain runs to 654 residues: NADPH-dependent diflavin oxidoreductase 1 (654 aa).

The region spanning 14–166 (ALVLYGSETG…TFIPWITDFR (153 aa)) is the Flavodoxin-like domain. FMN contacts are provided by residues 20–25 (SETGNA), 75–78 (STTG), and 113–122 (LGDSSYPKFN). The region spanning 235–485 (PDALTATLVE…QLQRGGLSSS (251 aa)) is the FAD-binding FR-type domain. Residues R389, 419 to 422 (RQFS), and 458 to 461 (GVCT) each bind FAD. NADP(+) is bound by residues T500, 568-569 (SR), and 574-578 (KIYVQ). An FAD-binding site is contributed by W654.

The protein belongs to the NADPH-dependent diflavin oxidoreductase NDOR1 family. In the N-terminal section; belongs to the flavodoxin family. This sequence in the C-terminal section; belongs to the flavoprotein pyridine nucleotide cytochrome reductase family. Interacts with dre2; as part of the cytosolic iron-sulfur (Fe-S) protein assembly (CIA) machinery. Requires FAD as cofactor. FMN serves as cofactor.

Its subcellular location is the cytoplasm. It localises to the mitochondrion. The enzyme catalyses 2 oxidized [2Fe-2S]-[protein] + NADPH = 2 reduced [2Fe-2S]-[protein] + NADP(+) + H(+). In terms of biological role, NADPH-dependent reductase which is a central component of the cytosolic iron-sulfur (Fe-S) protein assembly (CIA) machinery. Transfers electrons from NADPH via its FAD and FMN prosthetic groups to the [2Fe-2S] cluster of dre2, another key component of the CIA machinery. In turn, this reduced cluster provides electrons for assembly of cytosolic iron-sulfur cluster proteins. Positively controls H(2)O(2)-induced cell death. This is NADPH-dependent diflavin oxidoreductase 1 from Aspergillus fumigatus (strain ATCC MYA-4609 / CBS 101355 / FGSC A1100 / Af293) (Neosartorya fumigata).